Consider the following 239-residue polypeptide: tRNA (guanine-N(1)-)-methyltransferase (239 aa).

S-adenosyl-L-methionine-binding positions include glycine 109 and 128–133; that span reads IGDYVL.

This sequence belongs to the RNA methyltransferase TrmD family. In terms of assembly, homodimer.

It is found in the cytoplasm. The catalysed reaction is guanosine(37) in tRNA + S-adenosyl-L-methionine = N(1)-methylguanosine(37) in tRNA + S-adenosyl-L-homocysteine + H(+). In terms of biological role, specifically methylates guanosine-37 in various tRNAs. The sequence is that of tRNA (guanine-N(1)-)-methyltransferase from Thermus thermophilus (strain ATCC 27634 / DSM 579 / HB8).